A 518-amino-acid chain; its full sequence is 2-isopropylmalate synthase (518 aa).

Residues Ile4–Lys266 enclose the Pyruvate carboxyltransferase domain. Mn(2+) contacts are provided by Asp13, His201, His203, and Asn237. The interval Asp391–Ser518 is regulatory domain.

The protein belongs to the alpha-IPM synthase/homocitrate synthase family. LeuA type 1 subfamily. As to quaternary structure, homodimer. The cofactor is Mn(2+).

It is found in the cytoplasm. It carries out the reaction 3-methyl-2-oxobutanoate + acetyl-CoA + H2O = (2S)-2-isopropylmalate + CoA + H(+). Its pathway is amino-acid biosynthesis; L-leucine biosynthesis; L-leucine from 3-methyl-2-oxobutanoate: step 1/4. Its function is as follows. Catalyzes the condensation of the acetyl group of acetyl-CoA with 3-methyl-2-oxobutanoate (2-ketoisovalerate) to form 3-carboxy-3-hydroxy-4-methylpentanoate (2-isopropylmalate). This chain is 2-isopropylmalate synthase, found in Bacillus licheniformis (strain ATCC 14580 / DSM 13 / JCM 2505 / CCUG 7422 / NBRC 12200 / NCIMB 9375 / NCTC 10341 / NRRL NRS-1264 / Gibson 46).